A 640-amino-acid chain; its full sequence is 1-deoxy-D-xylulose-5-phosphate synthase (640 aa).

Thiamine diphosphate-binding positions include His72 and 113–115 (GHA). Asp144 contributes to the Mg(2+) binding site. Residues 145–146 (GA), Asn174, Tyr287, and Glu370 each bind thiamine diphosphate. Asn174 contacts Mg(2+).

Belongs to the transketolase family. DXPS subfamily. In terms of assembly, homodimer. Mg(2+) serves as cofactor. It depends on thiamine diphosphate as a cofactor.

The enzyme catalyses D-glyceraldehyde 3-phosphate + pyruvate + H(+) = 1-deoxy-D-xylulose 5-phosphate + CO2. It participates in metabolic intermediate biosynthesis; 1-deoxy-D-xylulose 5-phosphate biosynthesis; 1-deoxy-D-xylulose 5-phosphate from D-glyceraldehyde 3-phosphate and pyruvate: step 1/1. In terms of biological role, catalyzes the acyloin condensation reaction between C atoms 2 and 3 of pyruvate and glyceraldehyde 3-phosphate to yield 1-deoxy-D-xylulose-5-phosphate (DXP). The sequence is that of 1-deoxy-D-xylulose-5-phosphate synthase from Synechococcus sp. (strain RCC307).